The chain runs to 252 residues: NAC domain-containing protein 23 (252 aa).

Positions 12 to 177 constitute an NAC domain; sequence MPPGFRFQPT…EMVLCRISNK (166 aa). Residues 110-183 mediate DNA binding; sequence TAVKRRFVFY…ISNKDLPKPP (74 aa). A disordered region spans residues 225–252; that stretch reads VDDAAAGTDDPGDLDEEIDDSMQRNHGG. Residues 234 to 244 are compositionally biased toward acidic residues; it reads DPGDLDEEIDD.

Forms heterodimers with NAC26. As to expression, expressed in stems and panicles. Expressed in developing endosperm.

The protein localises to the nucleus. Its subcellular location is the cytoplasm. Functionally, transcription factor involved in the regulation of seed size. Binds to DNA-specific sequences of CLPD1 and OAT promoters in vitro. The chain is NAC domain-containing protein 23 from Oryza sativa subsp. japonica (Rice).